Consider the following 476-residue polypeptide: Aspartyl/glutamyl-tRNA(Asn/Gln) amidotransferase subunit B (476 aa).

This sequence belongs to the GatB/GatE family. GatB subfamily. Heterotrimer of A, B and C subunits.

It catalyses the reaction L-glutamyl-tRNA(Gln) + L-glutamine + ATP + H2O = L-glutaminyl-tRNA(Gln) + L-glutamate + ADP + phosphate + H(+). It carries out the reaction L-aspartyl-tRNA(Asn) + L-glutamine + ATP + H2O = L-asparaginyl-tRNA(Asn) + L-glutamate + ADP + phosphate + 2 H(+). Functionally, allows the formation of correctly charged Asn-tRNA(Asn) or Gln-tRNA(Gln) through the transamidation of misacylated Asp-tRNA(Asn) or Glu-tRNA(Gln) in organisms which lack either or both of asparaginyl-tRNA or glutaminyl-tRNA synthetases. The reaction takes place in the presence of glutamine and ATP through an activated phospho-Asp-tRNA(Asn) or phospho-Glu-tRNA(Gln). This Shouchella clausii (strain KSM-K16) (Alkalihalobacillus clausii) protein is Aspartyl/glutamyl-tRNA(Asn/Gln) amidotransferase subunit B.